The sequence spans 1024 residues: MLAVGRMEDEEGPEYGKPDFVLLDQLTMEDFMKNLELRFEKGRIYTYIGEVLVSVNPYQELPLYGPEAIAKYQGRELYERPPHLYAVANAAYKAMKRRSRDTCIVISGESGAGKTEASKHIMQYIAAVTNPSQRAEVERVKNVLLKSTCVLEAFGNARTNRNHNSSRFGKYMDINFDFKGDPVGGHIHSYLLEKSRVLKQHVGERNFHAFYQLLRGSEDQELQGLHLERNPAVYNFTRQGAGLNMGVHNALDSDEKSHQGVMEAMRIIGFSPDEVESIHRILAAILHLGNIEFVETEENGPQKGGLEVADEALVGYVAKLTATPRDLVLRTLLARTVASGGREVIEKSHTVAEASYARDACAKAMYQRLFEWVVNKINSIMEPRNRDPRCDGKDTVIGVLDIYGFEVFPVNSFEQFCINYCNEKLQQLFIQLILKQEQEEYEREGIAWQTIEYFNNATIVELVEQPHRGILAVLDEACSTAGPITDRIFLQTLDTHHRHHPHYSSRQLCPTDKTMEFGRDFQIKHYAGDVTYSVEGFIDKNRDSLFQDFKRLLYNSVDPTLRAMWPDGQQDITEVTKRPLTAGTLFKNSMVALVENLASKEPFYVRCIKPNEDKVAGRLDEAHCRHQVEYLGLLENVRVRRAGFASRQPYPRFLLRYKMTCEYTWPNHLLGSDRDAVSALLEQHGLQGDVAFGHSKLFIRSPRTLVTLEQSRARLIPIIVLLLQKAWRGTLARWHCRRLRAIYTIMRWFRRHKVRAHLIELQRRFQAARQPPLYGRDLVWPTPPAVLQPFQDTCRVLFSRWRARQLVKNIPPSDMIQIKAKVAAMGALQGLRQDWGCQRAWARDYLSSDTDNPTASHLFAEQLKALREKDGFGSVLFSSHVRKVNRFRKSRDRALLLTDRYLYKLEPGRQYRVMRAVPLEAVTGLSVTSGRDQLVVLHAQGYDDLVVCLHRSQPPLDNRIGELVGMLAAHCQGEGRTLEVRVSDCIPLSQRGARRLISVEPRPEQPEPDFQSSRSTFTLLWPSH.

Positions 15–713 (YGKPDFVLLD…TLVTLEQSRA (699 aa)) constitute a Myosin motor domain. An ATP-binding site is contributed by 108-115 (GESGAGKT). The segment at 590–612 (MVALVENLASKEPFYVRCIKPNE) is actin-binding. One can recognise an IQ domain in the interval 716–745 (IPIIVLLLQKAWRGTLARWHCRRLRAIYTI). The 194-residue stretch at 830-1023 (GLRQDWGCQR…RSTFTLLWPS (194 aa)) folds into the TH1 domain. The interval 999–1024 (VEPRPEQPEPDFQSSRSTFTLLWPSH) is disordered.

The protein belongs to the TRAFAC class myosin-kinesin ATPase superfamily. Myosin family. In terms of assembly, interacts with calmodulin; via its IQ motifs. Specifically expressed in hematopoietic cells. Detected in adult tissues of the immune system such as thymus, lymph nodes and spleen, but not in brain, lung, heart, liver, small intestine, testis and kidney (at protein level). Highly expressed in T-lymphocytes; constitutes the most highly expressed class I myosin in naive CD4 and CD8 T-cells. Also present in B-lymphocytes.

It localises to the cell membrane. The protein localises to the cell projection. Its subcellular location is the phagocytic cup. In terms of biological role, unconventional myosin required during immune response for detection of rare antigen-presenting cells by regulating T-cell migration. Unconventional myosins are actin-based motor molecules with ATPase activity and serve in intracellular movements. Acts as a regulator of T-cell migration by generating membrane tension, enforcing cell-intrinsic meandering search, thereby enhancing detection of rare antigens during lymph-node surveillance, enabling pathogen eradication. Also required in B-cells, where it regulates different membrane/cytoskeleton-dependent processes. Involved in Fc-gamma receptor (Fc-gamma-R) phagocytosis. In Mus musculus (Mouse), this protein is Unconventional myosin-Ig (Myo1g).